The chain runs to 119 residues: Large ribosomal subunit protein bL20 (119 aa).

The protein belongs to the bacterial ribosomal protein bL20 family.

Functionally, binds directly to 23S ribosomal RNA and is necessary for the in vitro assembly process of the 50S ribosomal subunit. It is not involved in the protein synthesizing functions of that subunit. The polypeptide is Large ribosomal subunit protein bL20 (Syntrophus aciditrophicus (strain SB)).